We begin with the raw amino-acid sequence, 316 residues long: Pantothenate kinase (316 aa).

95-102 (GSVAVGKS) provides a ligand contact to ATP.

Belongs to the prokaryotic pantothenate kinase family.

It localises to the cytoplasm. It catalyses the reaction (R)-pantothenate + ATP = (R)-4'-phosphopantothenate + ADP + H(+). It participates in cofactor biosynthesis; coenzyme A biosynthesis; CoA from (R)-pantothenate: step 1/5. The protein is Pantothenate kinase of Photorhabdus laumondii subsp. laumondii (strain DSM 15139 / CIP 105565 / TT01) (Photorhabdus luminescens subsp. laumondii).